The sequence spans 305 residues: tRNA pseudouridine synthase B (305 aa).

The Nucleophile role is filled by D41.

Belongs to the pseudouridine synthase TruB family. Type 1 subfamily.

The enzyme catalyses uridine(55) in tRNA = pseudouridine(55) in tRNA. Functionally, responsible for synthesis of pseudouridine from uracil-55 in the psi GC loop of transfer RNAs. This chain is tRNA pseudouridine synthase B, found in Prochlorococcus marinus (strain MIT 9301).